Here is a 68-residue protein sequence, read N- to C-terminus: uncharacterized protein (68 aa).

The interval 1–68 (METIIRRFSP…GNSKNIKTKK (68 aa)) is disordered. The segment covering 9 to 34 (SPKEKEKEKEKEEKDEKSKDKKEPIK) has biased composition (basic and acidic residues). Over residues 42–51 (DEEEEEDEQE) the composition is skewed to acidic residues.

This is an uncharacterized protein from Dictyostelium discoideum (Social amoeba).